A 577-amino-acid chain; its full sequence is Putative laccase-1 (577 aa).

Positions 1 to 28 are cleaved as a signal peptide; it reads MGTAKIPALLWFLLAGLVLALAVNPAHG. 2 consecutive Plastocyanin-like domains span residues 37–153 and 163–316; these read FITE…PKRG and KEIP…YTDS. 2 N-linked (GlcNAc...) asparagine glycosylation sites follow: N42 and N83. H87 and H89 together coordinate Cu cation. N-linked (GlcNAc...) asparagine glycosylation is present at N115. The Cu cation site is built by H132 and H134. N-linked (GlcNAc...) asparagine glycosylation is found at N276, N304, N382, and N402. A Plastocyanin-like 3 domain is found at 442–561; the sequence is DINGGGPLLT…DTMFIVKDGK (120 aa). Positions 478, 481, 483, 540, 541, 542, 546, and 551 each coordinate Cu cation.

This sequence belongs to the multicopper oxidase family. Requires Cu cation as cofactor.

Its subcellular location is the secreted. The protein resides in the extracellular space. It is found in the apoplast. The enzyme catalyses 4 hydroquinone + O2 = 4 benzosemiquinone + 2 H2O. In terms of biological role, lignin degradation and detoxification of lignin-derived products. The sequence is that of Putative laccase-1 (LAC1) from Oryza sativa subsp. japonica (Rice).